Consider the following 154-residue polypeptide: uncharacterized protein (154 aa).

Residues Met-1 to Asn-37 are disordered. Low complexity predominate over residues Asn-12 to Asn-37. N-linked (GlcNAc...) asparagine glycosylation occurs at Asn-82. Residues Ile-116–Ala-136 form a helical membrane-spanning segment. Residue Asn-149 is glycosylated (N-linked (GlcNAc...) asparagine).

It localises to the membrane. This is an uncharacterized protein from Dictyostelium discoideum (Social amoeba).